Here is a 484-residue protein sequence, read N- to C-terminus: ATP synthase subunit beta (484 aa).

Gly168–Thr175 serves as a coordination point for ATP.

It belongs to the ATPase alpha/beta chains family. In terms of assembly, F-type ATPases have 2 components, CF(1) - the catalytic core - and CF(0) - the membrane proton channel. CF(1) has five subunits: alpha(3), beta(3), gamma(1), delta(1), epsilon(1). CF(0) has three main subunits: a(1), b(2) and c(9-12). The alpha and beta chains form an alternating ring which encloses part of the gamma chain. CF(1) is attached to CF(0) by a central stalk formed by the gamma and epsilon chains, while a peripheral stalk is formed by the delta and b chains.

The protein resides in the cell membrane. The catalysed reaction is ATP + H2O + 4 H(+)(in) = ADP + phosphate + 5 H(+)(out). In terms of biological role, produces ATP from ADP in the presence of a proton gradient across the membrane. The catalytic sites are hosted primarily by the beta subunits. The sequence is that of ATP synthase subunit beta from Arthrobacter sp. (strain FB24).